A 342-amino-acid chain; its full sequence is Aspartate carbamoyltransferase catalytic subunit (342 aa).

Carbamoyl phosphate contacts are provided by Arg-59 and Thr-60. Lys-87 is an L-aspartate binding site. 3 residues coordinate carbamoyl phosphate: Arg-109, His-142, and Gln-145. L-aspartate is bound by residues Arg-182 and Arg-253. Gly-294 and Pro-295 together coordinate carbamoyl phosphate.

The protein belongs to the aspartate/ornithine carbamoyltransferase superfamily. ATCase family. In terms of assembly, heterododecamer (2C3:3R2) of six catalytic PyrB chains organized as two trimers (C3), and six regulatory PyrI chains organized as three dimers (R2).

The catalysed reaction is carbamoyl phosphate + L-aspartate = N-carbamoyl-L-aspartate + phosphate + H(+). The protein operates within pyrimidine metabolism; UMP biosynthesis via de novo pathway; (S)-dihydroorotate from bicarbonate: step 2/3. Its function is as follows. Catalyzes the condensation of carbamoyl phosphate and aspartate to form carbamoyl aspartate and inorganic phosphate, the committed step in the de novo pyrimidine nucleotide biosynthesis pathway. The sequence is that of Aspartate carbamoyltransferase catalytic subunit from Synechococcus sp. (strain WH7803).